The sequence spans 203 residues: Protein GrpE (203 aa).

The tract at residues 1 to 38 is disordered; it reads MTQDQTAEQMPAAESADQSADQGPAAESAAPPAVDSER.

It belongs to the GrpE family. As to quaternary structure, homodimer.

The protein resides in the cytoplasm. Functionally, participates actively in the response to hyperosmotic and heat shock by preventing the aggregation of stress-denatured proteins, in association with DnaK and GrpE. It is the nucleotide exchange factor for DnaK and may function as a thermosensor. Unfolded proteins bind initially to DnaJ; upon interaction with the DnaJ-bound protein, DnaK hydrolyzes its bound ATP, resulting in the formation of a stable complex. GrpE releases ADP from DnaK; ATP binding to DnaK triggers the release of the substrate protein, thus completing the reaction cycle. Several rounds of ATP-dependent interactions between DnaJ, DnaK and GrpE are required for fully efficient folding. In Paramagnetospirillum magneticum (strain ATCC 700264 / AMB-1) (Magnetospirillum magneticum), this protein is Protein GrpE.